Consider the following 850-residue polypeptide: Trimethylamine-N-oxide reductase (850 aa).

A signal peptide (tat-type signal) is located at residues 1-39 (MKNKDSLHVSRRRFLAQLGGLTVAGMLGPSLLTPRSARA). Ser191 is a Mo-bis(molybdopterin guanine dinucleotide) binding site.

The protein belongs to the prokaryotic molybdopterin-containing oxidoreductase family. Requires Mo-bis(molybdopterin guanine dinucleotide) as cofactor. Predicted to be exported by the Tat system. The position of the signal peptide cleavage has not been experimentally proven.

Its subcellular location is the periplasm. It carries out the reaction trimethylamine + 2 Fe(III)-[cytochrome c] + H2O = trimethylamine N-oxide + 2 Fe(II)-[cytochrome c] + 3 H(+). Its function is as follows. Reduces trimethylamine-N-oxide (TMAO) into trimethylamine; an anaerobic reaction coupled to energy-yielding reactions. The protein is Trimethylamine-N-oxide reductase (torA) of Salmonella typhimurium (strain LT2 / SGSC1412 / ATCC 700720).